The sequence spans 299 residues: uncharacterized protein (299 aa).

It belongs to the glycosyltransferase 2 family.

This is an uncharacterized protein from Mycoplasma pneumoniae (strain ATCC 29342 / M129 / Subtype 1) (Mycoplasmoides pneumoniae).